The chain runs to 1071 residues: Exportin-1 (1071 aa).

Residues 1 to 679 are necessary for HTLV-1 Rex-mediated mRNA export; it reads MPAIMTMLAD…QQATKNVDIL (679 aa). The 67-residue stretch at 46-112 folds into the Importin N-terminal domain; it reads AQEVLTHLKE…KKYVVGLIIK (67 aa). 6 HEAT repeats span residues 217 to 240, 241 to 277, 354 to 472, 515 to 553, 560 to 597, and 602 to 639; these read QNAP…PLGY, IFET…VSVS, MLLV…YVDT, RFLV…QYPR, KFLK…KCRR, and VQVG…AVGY. The interval 327 to 450 is interaction with Ran and nuclear export complex formation; sequence CTFLKEHDQL…VREFMKDTDS (124 aa). Position 391 is a phosphoserine (S391). Residues 411-414 form a necessary for HTLV-1 Rex multimerization region; it reads PMLF. An interaction with RANBP3 region spans residues 411 to 481; sequence PMLFKVRLLM…TERIMTEKLH (71 aa). K446 bears the N6-acetyllysine mark. Phosphothreonine is present on T448. S450 is subject to Phosphoserine. Position 454 is a phosphotyrosine (Y454). At K693 the chain carries N6-acetyllysine. HEAT repeat units follow at residues 775–813, 885–916, 917–954, and 1002–1039; these read NFVP…KLGG, TMRN…SFYQ, TYFC…NLVE, and FSLN…EERE. Residues 800–820 are interaction with HIV-1 Rev; it reads VLSTMAIIVNKLGGHITAEIP. S1031 carries the post-translational modification Phosphoserine.

This sequence belongs to the exportin family. As to quaternary structure, found in a U snRNA export complex with PHAX/RNUXA, NCBP1/CBP80, NCBP2/CBP20, RAN, XPO1 and m7G-capped RNA. Component of a nuclear export receptor complex composed of KPNB1, RAN, SNUPN and XPO1. Found in a trimeric export complex with SNUPN, RAN and XPO1. Found in a nuclear export complex with RANBP3 and RAN. Found in a 60S ribosomal subunit export complex with NMD3, RAN, XPO1. Interacts with DDX3X, NMD3, NUP42, NUP88, NUP214, RANBP3 and TERT. Interacts with NEMF (via its N-terminus). Interacts with the monomeric form of BIRC5/survivin deacetylated at 'Lys-129'. Interacts with DTNBP1 and SERTAD2; the interactions translocate DTNBP1 and SERTAD2 out of the nucleus. Interacts with ATF2. Interacts with SLC35G1 and STIM1. Interacts with DCAF8. Interacts with CPEB3. Interacts with HAX1. Interacts with BOK; translocates to the cytoplasm. Interacts with HSP90AB1. Interacts with LRPPRC; interacts with LRPPRC alone and also when LRPPRC is in complex with EIF4E and with EIF4E sensitivity element (4ESE)-containing mRNAs to form an EIF4E-dependent mRNA export complex. In terms of assembly, (Microbial infection) Interacts with HIV-1 Rev. (Microbial infection) Interacts with HTLV-1 Rex. As to quaternary structure, (Microbial infection) Interacts with influenza A nucleoprotein. In terms of assembly, (Microbial infection) Interacts with Epstein-Barr virus protein BMLF1. (Microbial infection) Part of a tetrameric complex composed of CRM1, importin alpha/beta dimer and the Venezuelan equine encephalitis virus (VEEV) capsid; this complex blocks the receptor-mediated transport through the nuclear pore. As to quaternary structure, (Microbial infection) Interacts with SARS-CoV virus protein ORF9b; this interaction mediates protein ORF9b export out of the nucleus. As to expression, expressed in heart, brain, placenta, lung, liver, skeletal muscle, pancreas, spleen, thymus, prostate, testis, ovary, small intestine, colon and peripheral blood leukocytes. Not expressed in the kidney.

It localises to the cytoplasm. It is found in the nucleus. The protein localises to the nucleoplasm. The protein resides in the cajal body. Its subcellular location is the nucleolus. In terms of biological role, mediates the nuclear export of cellular proteins (cargos) bearing a leucine-rich nuclear export signal (NES) and of RNAs. In the nucleus, in association with RANBP3, binds cooperatively to the NES on its target protein and to the GTPase RAN in its active GTP-bound form (Ran-GTP). Docking of this complex to the nuclear pore complex (NPC) is mediated through binding to nucleoporins. Upon transit of a nuclear export complex into the cytoplasm, disassembling of the complex and hydrolysis of Ran-GTP to Ran-GDP (induced by RANBP1 and RANGAP1, respectively) cause release of the cargo from the export receptor. The directionality of nuclear export is thought to be conferred by an asymmetric distribution of the GTP- and GDP-bound forms of Ran between the cytoplasm and nucleus. Involved in U3 snoRNA transport from Cajal bodies to nucleoli. Binds to late precursor U3 snoRNA bearing a TMG cap. (Microbial infection) Mediates the export of unspliced or incompletely spliced RNAs out of the nucleus from different viruses including HIV-1, HTLV-1 and influenza A. Interacts with, and mediates the nuclear export of HIV-1 Rev and HTLV-1 Rex proteins. Involved in HTLV-1 Rex multimerization. The chain is Exportin-1 (XPO1) from Homo sapiens (Human).